The sequence spans 373 residues: MLDRSKMTSAIPDSNSSSSPRGHNQSERDSYNRKKRKGPRLAHRKSRTGCQRCRARRVKCDESRPVCRDCHRHGIPCVYDRPAEEGAIPPSTGIQSRPLEPSPSDPSNDAHMELRLLHHFTLFTSATMPGAHLKRIKDCWSIDVPRLAFSYKPLLHAVFAIAALHLSKVNPDEAGLPDIHCNFLEQALREHRLCIGGITTQTADAVCFTSILLQIDVFATLQSRHVVSYEQVSEWMRLVRGSVAVFDAAMEIVRHNTHPPNIWCIIDTFPMPLRTNSDAGSFSFLLPTVPDDEDDETALEAYRGAVAHINATWLAMEAKEHPQISCRRLMVFPLFVTAGFIDLLEKRRPRALVPCPHHYVTYGGSETLHTNTS.

The interval 1-48 is disordered; that stretch reads MLDRSKMTSAIPDSNSSSSPRGHNQSERDSYNRKKRKGPRLAHRKSRT. Residues 33 to 48 are compositionally biased toward basic residues; the sequence is RKKRKGPRLAHRKSRT. The segment at residues 50–77 is a DNA-binding region (zn(2)-C6 fungal-type); sequence CQRCRARRVKCDESRPVCRDCHRHGIPC. The segment at 86 to 110 is disordered; sequence GAIPPSTGIQSRPLEPSPSDPSNDA.

Its subcellular location is the nucleus. Its function is as follows. Zn(2)-C6 fungal-type transcription factor; part of the gene cluster that mediates the biosynthesis fumihopaside A, a hopane-type glucoside that enhances the thermotolerance and UV resistance of N.fumigata. The sequence is that of Zn(2)-C6 fungal-type transcription factor afumD from Aspergillus fumigatus (strain CBS 144.89 / FGSC A1163 / CEA10) (Neosartorya fumigata).